A 673-amino-acid polypeptide reads, in one-letter code: Leucine zipper putative tumor suppressor 3 (673 aa).

Disordered regions lie at residues 1–157 (MAKL…CSEP), 172–239 (FHSM…QHLA), and 251–317 (IGTA…PPSP). Positions 79 to 92 (SRERPGRYPSEDKG) are enriched in basic and acidic residues. Residues 173–186 (HSMQNLCPPQTNGT) show a composition bias toward polar residues. The span at 215-235 (GLSDSGRNSLTSLPTYSSSYS) shows a compositional bias: low complexity. Over residues 258–269 (SGSGGSSGGGSG) the composition is skewed to gly residues. A compositionally biased stretch (low complexity) spans 274 to 294 (GTSDSGRASSKSGSSSSMGRP). The segment covering 295–307 (GHLGSGEGGGGGL) has biased composition (gly residues). 2 positions are modified to phosphoserine: Ser316 and Ser318. 2 coiled-coil regions span residues 317-496 (PSAL…SLRD) and 571-639 (RALR…RLRE). Positions 635-673 (RRLRERGAAGGASTPTPQHGEEKKAWTPSRLERIESTEI) are disordered. A compositionally biased stretch (basic and acidic residues) spans 653–673 (HGEEKKAWTPSRLERIESTEI).

The protein belongs to the LZTS3 family. Interacts (via C-terminus) with SHANK3 (via PDZ domain). Interacts (via coiled coil) with SIPA1L1. Can form homooligomers.

It localises to the synapse. Its subcellular location is the postsynaptic density. The protein localises to the cell projection. The protein resides in the dendritic spine. It is found in the dendrite. It localises to the cytoplasm. Its subcellular location is the cytoskeleton. Functionally, may be involved in promoting the maturation of dendritic spines, probably via regulating SIPA1L1 levels at the postsynaptic density of synapses. This is Leucine zipper putative tumor suppressor 3 from Homo sapiens (Human).